We begin with the raw amino-acid sequence, 660 residues long: Pentatricopeptide repeat-containing protein At1g03560, mitochondrial (660 aa).

A mitochondrion-targeting transit peptide spans 1–12 (MRRFYRKPFSVP). PPR repeat units lie at residues 151-185 (NLECYVSLVDVLALAKDVDRIRFVSSEIKKFEFPM), 186-220 (TVSAANALIKSFGKLGMVEELLWVWRKMKENGIEP), 221-255 (TLYTYNFLMNGLVSAMFVDSAERVFEVMESGRIKP), 256-290 (DIVTYNTMIKGYCKAGQTQKAMEKLRDMETRGHEA), 291-325 (DKITYMTMIQACYADSDFGSCVALYQEMDEKGIQV), 326-360 (PPHAFSLVIGGLCKEGKLNEGYTVFENMIRKGSKP), 361-395 (NVAIYTVLIDGYAKSGSVEDAIRLLHRMIDEGFKP), 396-430 (DVVTYSVVVNGLCKNGRVEEALDYFHTCRFDGLAI), 431-465 (NSMFYSSLIDGLGKAGRVDEAERLFEEMSEKGCTR), 466-496 (DSYCYNALIDAFTKHRKVDEAIALFKRMEEE), 502-536 (TVYTYTILLSGMFKEHRNEEALKLWDMMIDKGITP), 537-571 (TAACFRALSTGLCLSGKVARACKILDELAPMGVIL), 574-605 (ACEDMINTLCKAGRIKEACKLADGITERGREV), and 606-640 (PGRIRTVMINALRKVGKADLAMKLMHSKIGIGYER).

The protein belongs to the PPR family. P subfamily.

It localises to the mitochondrion. This is Pentatricopeptide repeat-containing protein At1g03560, mitochondrial from Arabidopsis thaliana (Mouse-ear cress).